A 289-amino-acid polypeptide reads, in one-letter code: Diaminopimelate epimerase (289 aa).

Residues Asn-13, Gln-47, and Asn-67 each contribute to the substrate site. Catalysis depends on Cys-76, which acts as the Proton donor. Substrate-binding positions include Gly-77–Asn-78, Asn-167, Asn-200, and Glu-218–Arg-219. Cys-227 functions as the Proton acceptor in the catalytic mechanism. Position 228–229 (Gly-228–Thr-229) interacts with substrate.

This sequence belongs to the diaminopimelate epimerase family. In terms of assembly, homodimer.

The protein localises to the cytoplasm. The enzyme catalyses (2S,6S)-2,6-diaminopimelate = meso-2,6-diaminopimelate. It participates in amino-acid biosynthesis; L-lysine biosynthesis via DAP pathway; DL-2,6-diaminopimelate from LL-2,6-diaminopimelate: step 1/1. Catalyzes the stereoinversion of LL-2,6-diaminopimelate (L,L-DAP) to meso-diaminopimelate (meso-DAP), a precursor of L-lysine and an essential component of the bacterial peptidoglycan. This Burkholderia mallei (strain NCTC 10247) protein is Diaminopimelate epimerase.